Here is a 565-residue protein sequence, read N- to C-terminus: Thiol:disulfide interchange protein DsbD (565 aa).

An N-terminal signal peptide occupies residues Met1–Ala19. The Periplasmic segment spans residues Gly20–Gln162. 2 disulfide bridges follow: Cys122–Cys128 and Cys182–Cys304. A helical membrane pass occupies residues Leu163 to Val183. The Cytoplasmic segment spans residues Leu184 to Leu207. The helical transmembrane segment at Leu208 to Val228 threads the bilayer. At Ala229 to Pro242 the chain is on the periplasmic side. Residues Tyr243–Leu263 traverse the membrane as a helical segment. Topologically, residues Thr264–Thr295 are cytoplasmic. A helical transmembrane segment spans residues Ile296 to Ile316. Over Ala317–Met322 the chain is Periplasmic. The helical transmembrane segment at Trp323–Ile343 threads the bilayer. Topologically, residues Thr344 to Pro356 are cytoplasmic. A helical membrane pass occupies residues Trp357–Leu377. The Periplasmic segment spans residues Glu378–Asp383. Residues Val384–Thr404 traverse the membrane as a helical segment. The Cytoplasmic segment spans residues Ser405–Gln417. The chain crosses the membrane as a helical span at residues Ile418–Ala438. The region spanning Trp434–Pro565 is the Thioredoxin domain. Residues Thr439–Pro565 are Periplasmic-facing. An intrachain disulfide couples Cys480 to Cys483.

Belongs to the thioredoxin family. DsbD subfamily.

The protein localises to the cell inner membrane. It carries out the reaction [protein]-dithiol + NAD(+) = [protein]-disulfide + NADH + H(+). It catalyses the reaction [protein]-dithiol + NADP(+) = [protein]-disulfide + NADPH + H(+). In terms of biological role, required to facilitate the formation of correct disulfide bonds in some periplasmic proteins and for the assembly of the periplasmic c-type cytochromes. Acts by transferring electrons from cytoplasmic thioredoxin to the periplasm. This transfer involves a cascade of disulfide bond formation and reduction steps. This is Thiol:disulfide interchange protein DsbD from Escherichia coli O157:H7.